The primary structure comprises 107 residues: Large ribosomal subunit protein bL21 (107 aa).

It belongs to the bacterial ribosomal protein bL21 family. As to quaternary structure, part of the 50S ribosomal subunit. Contacts protein L20.

Functionally, this protein binds to 23S rRNA in the presence of protein L20. The polypeptide is Large ribosomal subunit protein bL21 (Buchnera aphidicola subsp. Schizaphis graminum (strain Sg)).